The chain runs to 465 residues: Ribulose bisphosphate carboxylase large chain (465 aa).

The residue at position 4 (lysine 4) is an N6,N6,N6-trimethyllysine. The substrate site is built by asparagine 113 and threonine 163. Lysine 165 serves as the catalytic Proton acceptor. Position 167 (lysine 167) interacts with substrate. Mg(2+)-binding residues include lysine 191, aspartate 193, and glutamate 194. The residue at position 191 (lysine 191) is an N6-carboxylysine. Residue histidine 284 is the Proton acceptor of the active site. Positions 285, 317, and 369 each coordinate substrate.

It belongs to the RuBisCO large chain family. Type I subfamily. As to quaternary structure, heterohexadecamer of 8 large chains and 8 small chains; disulfide-linked. The disulfide link is formed within the large subunit homodimers. Mg(2+) is required as a cofactor. In terms of processing, the disulfide bond which can form in the large chain dimeric partners within the hexadecamer appears to be associated with oxidative stress and protein turnover.

It is found in the plastid. The protein resides in the chloroplast. The enzyme catalyses 2 (2R)-3-phosphoglycerate + 2 H(+) = D-ribulose 1,5-bisphosphate + CO2 + H2O. It catalyses the reaction D-ribulose 1,5-bisphosphate + O2 = 2-phosphoglycolate + (2R)-3-phosphoglycerate + 2 H(+). In terms of biological role, ruBisCO catalyzes two reactions: the carboxylation of D-ribulose 1,5-bisphosphate, the primary event in carbon dioxide fixation, as well as the oxidative fragmentation of the pentose substrate in the photorespiration process. Both reactions occur simultaneously and in competition at the same active site. In Hamamelis mollis (Chinese witch hazel), this protein is Ribulose bisphosphate carboxylase large chain.